Reading from the N-terminus, the 603-residue chain is MSSISQKVVIGLNKAAANNNLQNLDRRGFKTRCVSSSKAASCLRASCSLQLDVKPVQEGRRSGNYQPSIWDFNYVQSLNTPYKEERYLTRHAELIVQVKPLLEKKMEPAQQLELIDDLNNLGLSYFFQDRIKQILSFIYDENQCFHSNINDQAEKRDLYFTALGFRLLRQHGFDVSQEVFDCFKNDNGSDFKASLSDNTKGLLQLYEASFLVREGEDTLEQARQFATKFLRRKLDEIDDNHLLSCIHHSLEIPLHWRIQRLEARWFLDAYATRHDMNPVILELAKLDFNIIQATHQEELKDVSRWWQNTRLAEKLPFVRDRLVESYFWAIALFEPHQYGYQRRVAAKIITLATSIDDVYDIYGTLDELQLFTDNFRRWDTESLGRLPYSMQLFYMVIHNFVSELAYEILKEKGFIVIPYLQRSWVDLAESFLKEANWYYSGYTPSLEEYIDNGSISIGAVAVLSQVYFTLANSIEKPKIESMYKYHHILRLSGLLVRLHDDLGTSLFEKKRGDVPKAVEICMKERNVTEEEAEEHVKYLIREAWKEMNTATTAAGCPFMDELNVAAANLGRAAQFVYLDGDGHGVQHSKIHQQMGGLMFEPYV.

A chloroplast-targeting transit peptide spans 1–35 (MSSISQKVVIGLNKAAANNNLQNLDRRGFKTRCVS). Residues Arg319, Asp356, Asp360, Arg497, and Asp500 each contribute to the (2E)-geranyl diphosphate site. Mg(2+) contacts are provided by Asp356 and Asp360. Positions 356–360 (DDVYD) match the DDXXD motif motif. 3 residues coordinate Mg(2+): Asp500, Thr504, and Glu508.

It belongs to the terpene synthase family. Tpsb subfamily. In terms of assembly, monomer. Mg(2+) serves as cofactor. Mn(2+) is required as a cofactor.

The protein resides in the plastid. It localises to the chloroplast. The catalysed reaction is (2E)-geranyl diphosphate + H2O = (2E)-geraniol + diphosphate. It participates in secondary metabolite biosynthesis; terpenoid biosynthesis. Functionally, monoterpene synthase (mono-TPS) involved in the biosynthesis of monoterpenes natural products. Catalyzes the conversion of (2E)-geranyl diphosphate (GPP) into geraniol. The polypeptide is Geraniol synthase, chloroplastic (Perilla frutescens var. hirtella (Perilla citriodora)).